A 116-amino-acid chain; its full sequence is NADH-quinone oxidoreductase subunit A (116 aa).

A run of 3 helical transmembrane segments spans residues F3–L23, F61–I81, and Q88–W108.

Belongs to the complex I subunit 3 family. NDH-1 is composed of 14 different subunits. Subunits NuoA, H, J, K, L, M, N constitute the membrane sector of the complex.

It localises to the cell inner membrane. It catalyses the reaction a quinone + NADH + 5 H(+)(in) = a quinol + NAD(+) + 4 H(+)(out). Its function is as follows. NDH-1 shuttles electrons from NADH, via FMN and iron-sulfur (Fe-S) centers, to quinones in the respiratory chain. The immediate electron acceptor for the enzyme in this species is believed to be a menaquinone. Couples the redox reaction to proton translocation (for every two electrons transferred, four hydrogen ions are translocated across the cytoplasmic membrane), and thus conserves the redox energy in a proton gradient. This Bacteroides fragilis (strain ATCC 25285 / DSM 2151 / CCUG 4856 / JCM 11019 / LMG 10263 / NCTC 9343 / Onslow / VPI 2553 / EN-2) protein is NADH-quinone oxidoreductase subunit A.